Here is a 632-residue protein sequence, read N- to C-terminus: Chaperone protein HtpG (632 aa).

An a; substrate-binding region spans residues 1-339 (MTQQTMSFQA…SSDLPLNVSR (339 aa)). Residues 340 to 559 (EILQESRDVK…DNDMSGYLQR (220 aa)) are b. Residues 560-632 (MLKAAGQNAP…TNALLLSRAA (73 aa)) are c.

It belongs to the heat shock protein 90 family. Homodimer.

The protein resides in the cytoplasm. Molecular chaperone. Has ATPase activity. This Burkholderia thailandensis (strain ATCC 700388 / DSM 13276 / CCUG 48851 / CIP 106301 / E264) protein is Chaperone protein HtpG.